The primary structure comprises 203 residues: MAEGQVLVLDGRSHLLGRLAAIVAKQVLLGRKVVVVRCEGINISGNFYRNKLKYLAFLRKRMNTNPSRGPYHFRAPSRIFWRTVRGMLPHKTKRGQAALERLKVLDGIPPPYDKKKRMVVPAALKVVRLKPTRKFAYLGRLAHEVGWKYQAVTATLEEKRKEKAKIHYRKKKQLLRLRKQAEKNVEKKICKFTEVLKTNGLLV.

The residue at position 2 (A2) is an N-acetylalanine. R59 carries the citrulline modification. S77 bears the Phosphoserine mark. The residue at position 140 (R140) is a Citrulline. The residue at position 191 (K191) is an N6-acetyllysine.

It belongs to the universal ribosomal protein uL13 family. In terms of assembly, component of the 60S ribosome. Component of the GAIT complex. Interacts with EIF4G1. In terms of processing, phosphorylation at Ser-77 upon interferon-gamma treatment in macrophages involves a DAPK1-DAPK3 kinase cascade and is causing release from the ribosome, association with the GAIT complex and subsequent involvement in transcript-selective translation inhibition. Citrullinated by PADI4.

The protein resides in the cytoplasm. In terms of biological role, associated with ribosomes but is not required for canonical ribosome function and has extra-ribosomal functions. Component of the GAIT (gamma interferon-activated inhibitor of translation) complex which mediates interferon-gamma-induced transcript-selective translation inhibition in inflammation processes. Upon interferon-gamma activation and subsequent phosphorylation dissociates from the ribosome and assembles into the GAIT complex which binds to stem loop-containing GAIT elements in the 3'-UTR of diverse inflammatory mRNAs (such as ceruplasmin) and suppresses their translation. In the GAIT complex interacts with m7G cap-bound eIF4G at or near the eIF3-binding site and blocks the recruitment of the 43S ribosomal complex. Involved in methylation of rRNA. The polypeptide is Large ribosomal subunit protein uL13 (Rpl13a) (Rattus norvegicus (Rat)).